The chain runs to 98 residues: C-X-C motif chemokine 10 (98 aa).

Positions 1–21 (MNPSAAVVLCLVLLSLSGTQG) are cleaved as a signal peptide. Arginine 26 is modified (citrulline). Intrachain disulfides connect cysteine 30-cysteine 57 and cysteine 32-cysteine 74.

The protein belongs to the intercrine alpha (chemokine CxC) family. As to quaternary structure, monomer, dimer, and tetramer. Interacts with CXCR3 (via N-terminus). As to expression, in the central nervous system, CXCL10 is predominantly localized to activated neurons. Expressed in both microglia and astrocytes.

Its subcellular location is the secreted. Functionally, pro-inflammatory cytokine that is involved in a wide variety of processes such as chemotaxis, differentiation, and activation of peripheral immune cells, regulation of cell growth, apoptosis and modulation of angiostatic effects. Plays thereby an important role during viral infections by stimulating the activation and migration of immune cells to the infected sites. Mechanistically, binding of CXCL10 to the CXCR3 receptor activates G protein-mediated signaling and results in downstream activation of phospholipase C-dependent pathway, an increase in intracellular calcium production and actin reorganization. In turn, recruitment of activated Th1 lymphocytes occurs at sites of inflammation. Activation of the CXCL10/CXCR3 axis also plays an important role in neurons in response to brain injury for activating microglia, the resident macrophage population of the central nervous system, and directing them to the lesion site. This recruitment is an essential element for neuronal reorganization. The polypeptide is C-X-C motif chemokine 10 (Cxcl10) (Rattus norvegicus (Rat)).